The following is a 121-amino-acid chain: MFIKKDRKLARQRKHLRVRRRLMGTPERPRLSVYRSLRHIYAQVIDDTRGVTLVAASTLDPALKGLESTGNITAARKVGELIARKALAKGINKVVFDRGGNIYHGRIAAVAEGAREAGLNF.

Belongs to the universal ribosomal protein uL18 family. As to quaternary structure, part of the 50S ribosomal subunit; part of the 5S rRNA/L5/L18/L25 subcomplex. Contacts the 5S and 23S rRNAs.

This is one of the proteins that bind and probably mediate the attachment of the 5S RNA into the large ribosomal subunit, where it forms part of the central protuberance. This chain is Large ribosomal subunit protein uL18, found in Moorella thermoacetica (strain ATCC 39073 / JCM 9320).